The sequence spans 482 residues: Glutamate--tRNA ligase 1 (482 aa).

The short motif at P18–G28 is the 'HIGH' region element. A 'KMSKS' region motif is present at residues K252–R256. K255 is an ATP binding site.

The protein belongs to the class-I aminoacyl-tRNA synthetase family. Glutamate--tRNA ligase type 1 subfamily. Monomer.

The protein localises to the cytoplasm. It catalyses the reaction tRNA(Glu) + L-glutamate + ATP = L-glutamyl-tRNA(Glu) + AMP + diphosphate. Functionally, catalyzes the attachment of glutamate to tRNA(Glu) in a two-step reaction: glutamate is first activated by ATP to form Glu-AMP and then transferred to the acceptor end of tRNA(Glu). The protein is Glutamate--tRNA ligase 1 of Erythrobacter litoralis (strain HTCC2594).